A 367-amino-acid chain; its full sequence is Inositol-3-phosphate synthase (367 aa).

NAD(+)-binding residues include Asp78, Ala137, Tyr157, Ser200, Asp235, and Lys248.

Belongs to the myo-inositol 1-phosphate synthase family. NAD(+) is required as a cofactor.

The enzyme catalyses D-glucose 6-phosphate = 1D-myo-inositol 3-phosphate. Its function is as follows. Key enzyme in myo-inositol biosynthesis pathway that catalyzes the conversion of glucose 6-phosphate to 1D-myo-inositol 3-phosphate in a NAD-dependent manner. This chain is Inositol-3-phosphate synthase (ino1), found in Mycobacterium tuberculosis (strain CDC 1551 / Oshkosh).